A 459-amino-acid chain; its full sequence is Methylenetetrahydrofolate--tRNA-(uracil-5-)-methyltransferase TrmFO (459 aa).

15–20 (GAGLAG) serves as a coordination point for FAD.

This sequence belongs to the MnmG family. TrmFO subfamily. The cofactor is FAD.

The protein resides in the cytoplasm. It carries out the reaction uridine(54) in tRNA + (6R)-5,10-methylene-5,6,7,8-tetrahydrofolate + NADH + H(+) = 5-methyluridine(54) in tRNA + (6S)-5,6,7,8-tetrahydrofolate + NAD(+). It catalyses the reaction uridine(54) in tRNA + (6R)-5,10-methylene-5,6,7,8-tetrahydrofolate + NADPH + H(+) = 5-methyluridine(54) in tRNA + (6S)-5,6,7,8-tetrahydrofolate + NADP(+). Its function is as follows. Catalyzes the folate-dependent formation of 5-methyl-uridine at position 54 (M-5-U54) in all tRNAs. This is Methylenetetrahydrofolate--tRNA-(uracil-5-)-methyltransferase TrmFO from Syntrophotalea carbinolica (strain DSM 2380 / NBRC 103641 / GraBd1) (Pelobacter carbinolicus).